Consider the following 175-residue polypeptide: Anterior gradient protein 2 homolog (175 aa).

Residues 1-20 form the signal peptide; it reads MEKISVSAFLLLVALSYTLA. The required to promote cell adhesion stretch occupies residues 21–40; that stretch reads RDTTVKPAAKKDTKDSRPKL. 2 short sequence motifs (homodimer stabilization; interchain) span residues 45–54 and 60–67; these read SRGWGDQLIW and EALYKSKT.

The protein belongs to the AGR family. In terms of assembly, monomer and homodimer. Interacts with LYPD3 and DAG1 (alphaDAG1). Interacts with MUC2; disulfide-linked.

The protein resides in the secreted. It localises to the endoplasmic reticulum. Functionally, required for MUC2 post-transcriptional synthesis and secretion. May play a role in the production of mucus by intestinal cells. Proto-oncogene that may play a role in cell migration, cell differentiation and cell growth. Promotes cell adhesion. In Pongo abelii (Sumatran orangutan), this protein is Anterior gradient protein 2 homolog (AGR2).